A 314-amino-acid polypeptide reads, in one-letter code: UDP-3-O-acyl-N-acetylglucosamine deacetylase (314 aa).

Zn(2+) contacts are provided by His-82, His-239, and Asp-243. The active-site Proton donor is His-266.

It belongs to the LpxC family. Zn(2+) serves as cofactor.

It catalyses the reaction a UDP-3-O-[(3R)-3-hydroxyacyl]-N-acetyl-alpha-D-glucosamine + H2O = a UDP-3-O-[(3R)-3-hydroxyacyl]-alpha-D-glucosamine + acetate. The protein operates within glycolipid biosynthesis; lipid IV(A) biosynthesis; lipid IV(A) from (3R)-3-hydroxytetradecanoyl-[acyl-carrier-protein] and UDP-N-acetyl-alpha-D-glucosamine: step 2/6. Catalyzes the hydrolysis of UDP-3-O-myristoyl-N-acetylglucosamine to form UDP-3-O-myristoylglucosamine and acetate, the committed step in lipid A biosynthesis. This chain is UDP-3-O-acyl-N-acetylglucosamine deacetylase, found in Myxococcus xanthus (strain DK1622).